The following is a 324-amino-acid chain: Probable uridine nucleosidase 1 (324 aa).

His-248 is a catalytic residue.

This sequence belongs to the IUNH family.

The protein resides in the cytoplasm. It catalyses the reaction uridine + H2O = D-ribose + uracil. In terms of biological role, involved in pyrimidine breakdown. In Oryza sativa subsp. japonica (Rice), this protein is Probable uridine nucleosidase 1 (URH1).